Here is a 119-residue protein sequence, read N- to C-terminus: Urotensin-2B (119 aa).

The N-terminal stretch at 1-28 (MNKILSSTVCFGLLTLLSVLSFLQSVHG) is a signal peptide. Residues 29 to 109 (RPYLTQGNEI…VDGLFSSHPS (81 aa)) constitute a propeptide that is removed on maturation. C113 and C118 are joined by a disulfide.

Belongs to the urotensin-2 family.

The protein localises to the secreted. Potent vasoconstrictor. In Homo sapiens (Human), this protein is Urotensin-2B (UTS2B).